Reading from the N-terminus, the 74-residue chain is Protein kish-B (74 aa).

Residues 1–22 form the signal peptide; that stretch reads MTNVYSLDGILVFGLLFVCTCA. Residues 23-52 are Extracellular-facing; sequence YFKKVPRLKTWLLSEKKGVWGVFYKAAVIG. A helical membrane pass occupies residues 53 to 73; sequence TRLHAAVAIACIVMAFYVLFI. Residue K74 is a topological domain, cytoplasmic.

This sequence belongs to the KISH family.

The protein localises to the golgi apparatus membrane. Functionally, involved in the early part of the secretory pathway. The chain is Protein kish-B (TMEM167B) from Bos taurus (Bovine).